Reading from the N-terminus, the 569-residue chain is Urease subunit alpha (569 aa).

The Urease domain occupies 131–569 (GGIDAHIHFI…VPMAQRYFLF (439 aa)). Ni(2+)-binding residues include H136, H138, and K219. N6-carboxylysine is present on K219. Residue H221 participates in substrate binding. Residues H248 and H274 each coordinate Ni(2+). H322 (proton donor) is an active-site residue. D362 contributes to the Ni(2+) binding site.

Belongs to the metallo-dependent hydrolases superfamily. Urease alpha subunit family. As to quaternary structure, heterotrimer of UreA (gamma), UreB (beta) and UreC (alpha) subunits. Three heterotrimers associate to form the active enzyme. Requires Ni cation as cofactor. In terms of processing, carboxylation allows a single lysine to coordinate two nickel ions.

The protein localises to the cytoplasm. The enzyme catalyses urea + 2 H2O + H(+) = hydrogencarbonate + 2 NH4(+). The protein operates within nitrogen metabolism; urea degradation; CO(2) and NH(3) from urea (urease route): step 1/1. The protein is Urease subunit alpha of Bacillus sp. (strain TB-90).